The sequence spans 334 residues: Syntaxin-18 (334 aa).

Over 1-308 (MAVDITLLFR…EDIREAIKNN (308 aa)) the chain is Cytoplasmic. Disordered regions lie at residues 29–50 (GGAD…GDFS) and 166–225 (LSKL…GEDE). 2 stretches are compositionally biased toward basic and acidic residues: residues 33-50 (GSRD…GDFS) and 166-182 (LSKL…DSTS). Over residues 183–192 (EKAPQNASQD) the composition is skewed to polar residues. The span at 193 to 207 (SEGKPAAEELPEKPL) shows a compositional bias: basic and acidic residues. The t-SNARE coiled-coil homology domain occupies 242 to 304 (IGEMNSLFDE…KEGNEDIREA (63 aa)). A helical; Anchor for type IV membrane protein membrane pass occupies residues 309 to 329 (AGFRVWILFFLVMCSFSLLFL). Residues 330–334 (DWYDS) lie on the Lumenal side of the membrane.

The protein belongs to the syntaxin family. In terms of assembly, component of a SNARE complex consisting of STX18, USE1L, BNIP1/SEC20L, and SEC22B. RINT1/TIP20L and ZW10 are associated with the complex through interaction with BNIP1/SEC20L. Interacts directly with USE1L and BNIP1/SEC20L.

The protein resides in the endoplasmic reticulum membrane. Its subcellular location is the golgi apparatus membrane. Functionally, syntaxin that may be involved in targeting and fusion of Golgi-derived retrograde transport vesicles with the ER. The sequence is that of Syntaxin-18 (Stx18) from Mus musculus (Mouse).